Consider the following 196-residue polypeptide: Ribonuclease HII (196 aa).

The 188-residue stretch at 9–196 (SLIAGVDEVG…APVKRAIGLK (188 aa)) folds into the RNase H type-2 domain. Aspartate 15, glutamate 16, and aspartate 107 together coordinate a divalent metal cation.

It belongs to the RNase HII family. Mn(2+) serves as cofactor. The cofactor is Mg(2+).

It localises to the cytoplasm. The enzyme catalyses Endonucleolytic cleavage to 5'-phosphomonoester.. In terms of biological role, endonuclease that specifically degrades the RNA of RNA-DNA hybrids. The sequence is that of Ribonuclease HII from Photorhabdus laumondii subsp. laumondii (strain DSM 15139 / CIP 105565 / TT01) (Photorhabdus luminescens subsp. laumondii).